Consider the following 148-residue polypeptide: Arginine repressor (148 aa).

It belongs to the ArgR family.

It localises to the cytoplasm. The protein operates within amino-acid biosynthesis; L-arginine biosynthesis [regulation]. Functionally, regulates arginine biosynthesis genes. This is Arginine repressor from Pelodictyon phaeoclathratiforme (strain DSM 5477 / BU-1).